The primary structure comprises 439 residues: tRNA-2-methylthio-N(6)-dimethylallyladenosine synthase (439 aa).

Residues 5–121 (KKLFIKTYGC…LPELEAKTRA (117 aa)) enclose the MTTase N-terminal domain. [4Fe-4S] cluster contacts are provided by Cys14, Cys50, Cys84, Cys159, Cys163, and Cys166. Residues 145–378 (AKRGPTAFLT…ITRHQREIQD (234 aa)) form the Radical SAM core domain. The region spanning 378-439 (DGMVGREVSV…GANSLAGELA (62 aa)) is the TRAM domain.

It belongs to the methylthiotransferase family. MiaB subfamily. In terms of assembly, monomer. The cofactor is [4Fe-4S] cluster.

The protein localises to the cytoplasm. The enzyme catalyses N(6)-dimethylallyladenosine(37) in tRNA + (sulfur carrier)-SH + AH2 + 2 S-adenosyl-L-methionine = 2-methylsulfanyl-N(6)-dimethylallyladenosine(37) in tRNA + (sulfur carrier)-H + 5'-deoxyadenosine + L-methionine + A + S-adenosyl-L-homocysteine + 2 H(+). Functionally, catalyzes the methylthiolation of N6-(dimethylallyl)adenosine (i(6)A), leading to the formation of 2-methylthio-N6-(dimethylallyl)adenosine (ms(2)i(6)A) at position 37 in tRNAs that read codons beginning with uridine. In Ruegeria pomeroyi (strain ATCC 700808 / DSM 15171 / DSS-3) (Silicibacter pomeroyi), this protein is tRNA-2-methylthio-N(6)-dimethylallyladenosine synthase.